The chain runs to 166 residues: MFHADRIIVAFDGSENSKKALLTAIDLAKTVNAAITVAHSHDMKDNQTVIDPPRPAAEASYISGGMTSVPDPLISDVTSPEPMIYEDRTEEVIAEARMMLNEQQADGDIDILEGDPAESIIEHANRISADMIVTGSRDQNRLKKLIFGSVSEKLSAKSDIPVLIVK.

It belongs to the universal stress protein A family.

This chain is Stress response protein NhaX (nhaX), found in Bacillus subtilis (strain 168).